Consider the following 455-residue polypeptide: Argininosuccinate lyase (455 aa).

It belongs to the lyase 1 family. Argininosuccinate lyase subfamily.

The protein resides in the cytoplasm. The enzyme catalyses 2-(N(omega)-L-arginino)succinate = fumarate + L-arginine. It functions in the pathway amino-acid biosynthesis; L-arginine biosynthesis; L-arginine from L-ornithine and carbamoyl phosphate: step 3/3. The sequence is that of Argininosuccinate lyase from Shewanella baltica (strain OS185).